The primary structure comprises 38 residues: Potassium channel toxin alpha-KTx 3.11 (38 aa).

Intrachain disulfides connect C8/C28, C14/C33, and C18/C35.

It belongs to the short scorpion toxin superfamily. Potassium channel inhibitor family. Alpha-KTx 03 subfamily. As to expression, expressed by the venom gland.

It is found in the secreted. Functionally, blocks the voltage-gated potassium channel Kv1.3/KCNA3 (IC(50)=7.2 nM). Correnti and colleagues have also shown that this toxin inhibits Kv1.1/KCNA1, which is different from Abdel-Mottaleb and colleagues conclusions. In Odontobuthus doriae (Yellow Iranian scorpion), this protein is Potassium channel toxin alpha-KTx 3.11.